Consider the following 282-residue polypeptide: 4-hydroxy-3-methylbut-2-enyl diphosphate reductase (282 aa).

Residue cysteine 14 coordinates [4Fe-4S] cluster. Positions 43 and 78 each coordinate (2E)-4-hydroxy-3-methylbut-2-enyl diphosphate. Dimethylallyl diphosphate contacts are provided by histidine 43 and histidine 78. Residues histidine 43 and histidine 78 each contribute to the isopentenyl diphosphate site. Cysteine 100 contacts [4Fe-4S] cluster. Residue histidine 128 participates in (2E)-4-hydroxy-3-methylbut-2-enyl diphosphate binding. Histidine 128 is a binding site for dimethylallyl diphosphate. Histidine 128 lines the isopentenyl diphosphate pocket. Catalysis depends on glutamate 130, which acts as the Proton donor. Threonine 164 provides a ligand contact to (2E)-4-hydroxy-3-methylbut-2-enyl diphosphate. Cysteine 192 is a binding site for [4Fe-4S] cluster. Residues serine 220, serine 221, asparagine 222, and serine 266 each coordinate (2E)-4-hydroxy-3-methylbut-2-enyl diphosphate. Serine 220, serine 221, asparagine 222, and serine 266 together coordinate dimethylallyl diphosphate. Isopentenyl diphosphate contacts are provided by serine 220, serine 221, asparagine 222, and serine 266.

Belongs to the IspH family. It depends on [4Fe-4S] cluster as a cofactor.

It carries out the reaction isopentenyl diphosphate + 2 oxidized [2Fe-2S]-[ferredoxin] + H2O = (2E)-4-hydroxy-3-methylbut-2-enyl diphosphate + 2 reduced [2Fe-2S]-[ferredoxin] + 2 H(+). The enzyme catalyses dimethylallyl diphosphate + 2 oxidized [2Fe-2S]-[ferredoxin] + H2O = (2E)-4-hydroxy-3-methylbut-2-enyl diphosphate + 2 reduced [2Fe-2S]-[ferredoxin] + 2 H(+). The protein operates within isoprenoid biosynthesis; dimethylallyl diphosphate biosynthesis; dimethylallyl diphosphate from (2E)-4-hydroxy-3-methylbutenyl diphosphate: step 1/1. It functions in the pathway isoprenoid biosynthesis; isopentenyl diphosphate biosynthesis via DXP pathway; isopentenyl diphosphate from 1-deoxy-D-xylulose 5-phosphate: step 6/6. Functionally, catalyzes the conversion of 1-hydroxy-2-methyl-2-(E)-butenyl 4-diphosphate (HMBPP) into a mixture of isopentenyl diphosphate (IPP) and dimethylallyl diphosphate (DMAPP). Acts in the terminal step of the DOXP/MEP pathway for isoprenoid precursor biosynthesis. The protein is 4-hydroxy-3-methylbut-2-enyl diphosphate reductase of Clostridium perfringens (strain 13 / Type A).